The chain runs to 907 residues: Probable disease resistance protein At1g58390 (907 aa).

An NB-ARC domain is found at 144–456 (QGDRQREMRQ…AEGISTAEDY (313 aa)). 190–197 (GMGGLGKT) is a binding site for ATP. 2 LRR repeats span residues 608–631 (LIHL…LGNL) and 843–868 (MPLL…RFIY).

It belongs to the disease resistance NB-LRR family.

Functionally, possible disease resistance protein. The chain is Probable disease resistance protein At1g58390 from Arabidopsis thaliana (Mouse-ear cress).